A 141-amino-acid polypeptide reads, in one-letter code: ATP synthase epsilon chain (141 aa).

This sequence belongs to the ATPase epsilon chain family. In terms of assembly, F-type ATPases have 2 components, CF(1) - the catalytic core - and CF(0) - the membrane proton channel. CF(1) has five subunits: alpha(3), beta(3), gamma(1), delta(1), epsilon(1). CF(0) has three main subunits: a, b and c.

It is found in the cell inner membrane. Produces ATP from ADP in the presence of a proton gradient across the membrane. The sequence is that of ATP synthase epsilon chain from Burkholderia multivorans (strain ATCC 17616 / 249).